Here is a 256-residue protein sequence, read N- to C-terminus: UPF0246 protein TERTU_4575 (256 aa).

It belongs to the UPF0246 family.

The polypeptide is UPF0246 protein TERTU_4575 (Teredinibacter turnerae (strain ATCC 39867 / T7901)).